We begin with the raw amino-acid sequence, 328 residues long: D-cysteine desulfhydrase (328 aa).

Lysine 51 is subject to N6-(pyridoxal phosphate)lysine.

This sequence belongs to the ACC deaminase/D-cysteine desulfhydrase family. Homodimer. The cofactor is pyridoxal 5'-phosphate.

The catalysed reaction is D-cysteine + H2O = hydrogen sulfide + pyruvate + NH4(+) + H(+). In terms of biological role, catalyzes the alpha,beta-elimination reaction of D-cysteine and of several D-cysteine derivatives. It could be a defense mechanism against D-cysteine. The chain is D-cysteine desulfhydrase from Escherichia coli O157:H7.